The following is a 128-amino-acid chain: S-adenosylmethionine decarboxylase proenzyme (128 aa).

Ser61 functions as the Schiff-base intermediate with substrate; via pyruvic acid in the catalytic mechanism. At Ser61 the chain carries Pyruvic acid (Ser); by autocatalysis. His66 acts as the Proton acceptor; for processing activity in catalysis. The Proton donor; for catalytic activity role is filled by Cys81.

It belongs to the prokaryotic AdoMetDC family. Type 1 subfamily. As to quaternary structure, heterotetramer of two alpha and two beta chains arranged as a dimer of alpha/beta heterodimers. The cofactor is pyruvate. In terms of processing, is synthesized initially as an inactive proenzyme. Formation of the active enzyme involves a self-maturation process in which the active site pyruvoyl group is generated from an internal serine residue via an autocatalytic post-translational modification. Two non-identical subunits are generated from the proenzyme in this reaction, and the pyruvate is formed at the N-terminus of the alpha chain, which is derived from the carboxyl end of the proenzyme. The post-translation cleavage follows an unusual pathway, termed non-hydrolytic serinolysis, in which the side chain hydroxyl group of the serine supplies its oxygen atom to form the C-terminus of the beta chain, while the remainder of the serine residue undergoes an oxidative deamination to produce ammonia and the pyruvoyl group blocking the N-terminus of the alpha chain.

The enzyme catalyses S-adenosyl-L-methionine + H(+) = S-adenosyl 3-(methylsulfanyl)propylamine + CO2. It participates in amine and polyamine biosynthesis; S-adenosylmethioninamine biosynthesis; S-adenosylmethioninamine from S-adenosyl-L-methionine: step 1/1. In terms of biological role, catalyzes the decarboxylation of S-adenosylmethionine to S-adenosylmethioninamine (dcAdoMet), the propylamine donor required for the synthesis of the polyamines spermine and spermidine from the diamine putrescine. The polypeptide is S-adenosylmethionine decarboxylase proenzyme (Synechococcus sp. (strain WH7803)).